We begin with the raw amino-acid sequence, 601 residues long: MCGIVGYIGTNNAKGILLEGLEKLEYRGYDSAGIALQNKDLVTVVKEKGRIADLASLVPSDAFGTTGIGHTRWATHGKPNHENAHPHQSKSGRFTIVHNGVIENYTLLKEEYLKNHSFISDTDTEVIVQLIELFAEKLSTKEAFKKALSLLHGSYAICLIDQTDTETLYAAKNKSPLLIGKGENFNVIASDAMAVLKETDEFVEIMDKEIVIVTKDGFTLETLEGEEVSRASYTAELDASDIEKGTYPHYMLKEIDEQPAVTRKIIQAYQNEAGEINVDQTILDEILSSDRIHIVACGTSYHAGLVGKNLIEKMAKIPVEVHVSSEFGYNLPLMSKKPLFIFITQSGETADSRQCLVKVKELGYRTLTLTNVPGSTLDREADHSMYLYAGPEIAVASTKAYTAQISVLAVLAVSLGREIGDAEALSINLAAELGIVATAMEAMVSSKEVIEHIAGEYLATSRNAFFLGRNIDYFVAMEAALKLKEISYIQAEGFASGELKHGTIALIEDGTPVLALITQESINWNIRGNVNEVLARGAKTCVFAMENVAQPGDRFVIPQVHPLLTPLASVIPCQLLAYYAALHRDCDVDKPRNLAKSVTVE.

C2 serves as the catalytic Nucleophile; for GATase activity. A Glutamine amidotransferase type-2 domain is found at C2–D216. SIS domains follow at residues I282 to D421 and I453 to P591. The active-site For Fru-6P isomerization activity is K596.

Homodimer.

The protein localises to the cytoplasm. The enzyme catalyses D-fructose 6-phosphate + L-glutamine = D-glucosamine 6-phosphate + L-glutamate. In terms of biological role, catalyzes the first step in hexosamine metabolism, converting fructose-6P into glucosamine-6P using glutamine as a nitrogen source. The polypeptide is Glutamine--fructose-6-phosphate aminotransferase [isomerizing] (Listeria innocua serovar 6a (strain ATCC BAA-680 / CLIP 11262)).